Here is a 211-residue protein sequence, read N- to C-terminus: Outer-membrane lipoprotein carrier protein (211 aa).

An N-terminal signal peptide occupies residues 1 to 25 (MRAIRMLLVSALTLGSLSATLSAHA).

The protein belongs to the LolA family. As to quaternary structure, monomer.

The protein resides in the periplasm. In terms of biological role, participates in the translocation of lipoproteins from the inner membrane to the outer membrane. Only forms a complex with a lipoprotein if the residue after the N-terminal Cys is not an aspartate (The Asp acts as a targeting signal to indicate that the lipoprotein should stay in the inner membrane). This chain is Outer-membrane lipoprotein carrier protein, found in Pseudomonas putida (strain W619).